We begin with the raw amino-acid sequence, 470 residues long: Uronate isomerase (470 aa).

This sequence belongs to the metallo-dependent hydrolases superfamily. Uronate isomerase family.

The enzyme catalyses D-glucuronate = D-fructuronate. It carries out the reaction aldehydo-D-galacturonate = keto-D-tagaturonate. The protein operates within carbohydrate metabolism; pentose and glucuronate interconversion. The sequence is that of Uronate isomerase from Shigella boydii serotype 18 (strain CDC 3083-94 / BS512).